A 112-amino-acid polypeptide reads, in one-letter code: Cytochrome c 2.1 (112 aa).

Heme c-binding residues include Cys20, Cys23, His24, and Met85.

The protein belongs to the cytochrome c family. In terms of processing, binds 1 heme c group covalently per subunit.

The protein resides in the mitochondrion intermembrane space. Its function is as follows. Electron carrier protein. The oxidized form of the cytochrome c heme group can accept an electron from the heme group of the cytochrome c1 subunit of cytochrome reductase. Cytochrome c then transfers this electron to the cytochrome oxidase complex, the final protein carrier in the mitochondrial electron-transport chain. This is Cytochrome c 2.1 from Caenorhabditis briggsae.